The primary structure comprises 259 residues: 5'-nucleotidase SurE (259 aa).

Residues Asp-8, Asp-9, Ser-41, and Asn-100 each contribute to the a divalent metal cation site.

This sequence belongs to the SurE nucleotidase family. It depends on a divalent metal cation as a cofactor.

It is found in the cytoplasm. The enzyme catalyses a ribonucleoside 5'-phosphate + H2O = a ribonucleoside + phosphate. In terms of biological role, nucleotidase that shows phosphatase activity on nucleoside 5'-monophosphates. The polypeptide is 5'-nucleotidase SurE (Natranaerobius thermophilus (strain ATCC BAA-1301 / DSM 18059 / JW/NM-WN-LF)).